A 165-amino-acid polypeptide reads, in one-letter code: Cyclic pyranopterin monophosphate synthase (165 aa).

Substrate contacts are provided by residues 76 to 78 (MCH) and 113 to 114 (IE). The active site involves Asp-128.

It belongs to the MoaC family. In terms of assembly, homohexamer; trimer of dimers.

The catalysed reaction is (8S)-3',8-cyclo-7,8-dihydroguanosine 5'-triphosphate = cyclic pyranopterin phosphate + diphosphate. It functions in the pathway cofactor biosynthesis; molybdopterin biosynthesis. Catalyzes the conversion of (8S)-3',8-cyclo-7,8-dihydroguanosine 5'-triphosphate to cyclic pyranopterin monophosphate (cPMP). The sequence is that of Cyclic pyranopterin monophosphate synthase from Limosilactobacillus fermentum (strain NBRC 3956 / LMG 18251) (Lactobacillus fermentum).